The following is a 101-amino-acid chain: Small ribosomal subunit protein bS6 (101 aa).

The protein belongs to the bacterial ribosomal protein bS6 family.

Its function is as follows. Binds together with bS18 to 16S ribosomal RNA. The protein is Small ribosomal subunit protein bS6 of Nitratidesulfovibrio vulgaris (strain ATCC 29579 / DSM 644 / CCUG 34227 / NCIMB 8303 / VKM B-1760 / Hildenborough) (Desulfovibrio vulgaris).